We begin with the raw amino-acid sequence, 476 residues long: MKVRVRLAPSPTGTLHIGTARTAVFNWLFARHQGGQFLLRIEDTDKERSKPEFTTNILEGLKWLGLNWDEQPIIQSQHVDDHRAAIQKLLDRDLAYRCYASETELEAMRETQKAQGKAPRYDNRHRDLNPEQEAAFQSEGRTAVVRFRIDDDATISWKDLVRGPMHWKGSDLGGDMVISRRAPAKEIGDPLYNLVVVVDDAAMSISHVIRGEDHIANTAKQLLIYEALGLPIPQFAHTPLILNSEGRKLSKRDGVTSISDFQAMGYTAEAMANYMSLLGWSVPEGTDERFTLQQAATVFSFDRVNKAGAKFDWDKLNWLNSQVLHDLPKDQLLHELKPLWSKAGWALPEENWCLDLAELLGPSLTLLKDGVDQARPFFEEPTLQADGLEQLAVDGAKAGLSNLLDQLDRTSWDGFDVKQAQQLLTNAAQAANVKKGVIMKSLRAALLGRLQGPDLITTWGLLARIGQDLNRLRRCL.

The short motif at 9–19 (PSPTGTLHIGT) is the 'HIGH' region element. The 'KMSKS' region motif lies at 248–252 (KLSKR). Lys-251 lines the ATP pocket.

The protein belongs to the class-I aminoacyl-tRNA synthetase family. Glutamate--tRNA ligase type 1 subfamily. As to quaternary structure, monomer.

It is found in the cytoplasm. It catalyses the reaction tRNA(Glu) + L-glutamate + ATP = L-glutamyl-tRNA(Glu) + AMP + diphosphate. In terms of biological role, catalyzes the attachment of glutamate to tRNA(Glu) in a two-step reaction: glutamate is first activated by ATP to form Glu-AMP and then transferred to the acceptor end of tRNA(Glu). In Prochlorococcus marinus (strain MIT 9313), this protein is Glutamate--tRNA ligase.